The chain runs to 149 residues: Azurin (149 aa).

The signal sequence occupies residues 1–20 (MLAKATLAIVLSAASLPVLA). One can recognise a Plastocyanin-like domain in the interval 21–149 (AQCEATIESN…MMKGTLKLSN (129 aa)). Cysteines 23 and 46 form a disulfide. Cu cation contacts are provided by H66, C132, H137, and M141.

The protein localises to the periplasm. In terms of biological role, transfers electrons from cytochrome c551 to cytochrome oxidase. This is Azurin (azu) from Achromobacter denitrificans (Alcaligenes denitrificans).